Here is a 90-residue protein sequence, read N- to C-terminus: Translation initiation factor IF-1 (90 aa).

The 76-residue stretch at 15-90 (KKQKRKKEEV…TLGRIVFRHK (76 aa)) folds into the S1-like domain.

Belongs to the IF-1 family. As to quaternary structure, component of the 30S ribosomal translation pre-initiation complex which assembles on the 30S ribosome in the order IF-2 and IF-3, IF-1 and N-formylmethionyl-tRNA(fMet); mRNA recruitment can occur at any time during PIC assembly.

It is found in the cytoplasm. In terms of biological role, one of the essential components for the initiation of protein synthesis. Stabilizes the binding of IF-2 and IF-3 on the 30S subunit to which N-formylmethionyl-tRNA(fMet) subsequently binds. Helps modulate mRNA selection, yielding the 30S pre-initiation complex (PIC). Upon addition of the 50S ribosomal subunit IF-1, IF-2 and IF-3 are released leaving the mature 70S translation initiation complex. In Mycoplasma sp, this protein is Translation initiation factor IF-1.